Consider the following 408-residue polypeptide: NADH-quinone oxidoreductase subunit D (408 aa).

It belongs to the complex I 49 kDa subunit family. As to quaternary structure, NDH-1 is composed of 14 different subunits. Subunits NuoB, C, D, E, F, and G constitute the peripheral sector of the complex.

The protein localises to the cell inner membrane. The enzyme catalyses a quinone + NADH + 5 H(+)(in) = a quinol + NAD(+) + 4 H(+)(out). In terms of biological role, NDH-1 shuttles electrons from NADH, via FMN and iron-sulfur (Fe-S) centers, to quinones in the respiratory chain. The immediate electron acceptor for the enzyme in this species is believed to be ubiquinone. Couples the redox reaction to proton translocation (for every two electrons transferred, four hydrogen ions are translocated across the cytoplasmic membrane), and thus conserves the redox energy in a proton gradient. This is NADH-quinone oxidoreductase subunit D from Campylobacter jejuni subsp. jejuni serotype O:6 (strain 81116 / NCTC 11828).